Reading from the N-terminus, the 339-residue chain is DNA-directed RNA polymerase subunit alpha (339 aa).

The interval 1 to 233 (MVREEVAGST…DLFLPFLHAE (233 aa)) is alpha N-terminal domain (alpha-NTD). An alpha C-terminal domain (alpha-CTD) region spans residues 264 to 339 (KKGIPLNCIF…IDLLKNKLSF (76 aa)).

The protein belongs to the RNA polymerase alpha chain family. In terms of assembly, in plastids the minimal PEP RNA polymerase catalytic core is composed of four subunits: alpha, beta, beta', and beta''. When a (nuclear-encoded) sigma factor is associated with the core the holoenzyme is formed, which can initiate transcription.

Its subcellular location is the plastid. The protein resides in the chloroplast. The catalysed reaction is RNA(n) + a ribonucleoside 5'-triphosphate = RNA(n+1) + diphosphate. DNA-dependent RNA polymerase catalyzes the transcription of DNA into RNA using the four ribonucleoside triphosphates as substrates. This Elymus californicus (California bottlebrush grass) protein is DNA-directed RNA polymerase subunit alpha.